The primary structure comprises 169 residues: Superoxide dismutase [Cu-Zn] 1 (169 aa).

The signal sequence occupies residues 1–18; it reads MFEQWDALCAVLFSFSIA. The Cu cation site is built by H65, H67, and H83. Cysteines 72 and 165 form a disulfide. Zn(2+)-binding residues include H83, H91, H100, and D103. H145 provides a ligand contact to Cu cation.

The protein belongs to the Cu-Zn superoxide dismutase family. Requires Cu cation as cofactor. The cofactor is Zn(2+).

The catalysed reaction is 2 superoxide + 2 H(+) = H2O2 + O2. Its function is as follows. Destroys radicals which are normally produced within the cells and which are toxic to biological systems. The sequence is that of Superoxide dismutase [Cu-Zn] 1 (sodC1) from Aquifex aeolicus (strain VF5).